Consider the following 336-residue polypeptide: Holliday junction branch migration complex subunit RuvB (336 aa).

The large ATPase domain (RuvB-L) stretch occupies residues 1-182 (MKERIVNLET…FGMSFRMQFY (182 aa)). ATP contacts are provided by residues Leu21, Arg22, Gly63, Lys66, Thr67, Ser68, 129 to 131 (EDF), Arg172, Tyr182, and Arg219. Mg(2+) is bound at residue Thr67. The segment at 183-253 (SPSELALIIK…ITLHALNELG (71 aa)) is small ATPAse domain (RuvB-S). The interval 256 to 336 (ELGFDEADLA…IPTLKSQSLF (81 aa)) is head domain (RuvB-H). Arg310 and Arg315 together coordinate DNA.

It belongs to the RuvB family. Homohexamer. Forms an RuvA(8)-RuvB(12)-Holliday junction (HJ) complex. HJ DNA is sandwiched between 2 RuvA tetramers; dsDNA enters through RuvA and exits via RuvB. An RuvB hexamer assembles on each DNA strand where it exits the tetramer. Each RuvB hexamer is contacted by two RuvA subunits (via domain III) on 2 adjacent RuvB subunits; this complex drives branch migration. In the full resolvosome a probable DNA-RuvA(4)-RuvB(12)-RuvC(2) complex forms which resolves the HJ.

It is found in the cytoplasm. It catalyses the reaction ATP + H2O = ADP + phosphate + H(+). In terms of biological role, the RuvA-RuvB-RuvC complex processes Holliday junction (HJ) DNA during genetic recombination and DNA repair, while the RuvA-RuvB complex plays an important role in the rescue of blocked DNA replication forks via replication fork reversal (RFR). RuvA specifically binds to HJ cruciform DNA, conferring on it an open structure. The RuvB hexamer acts as an ATP-dependent pump, pulling dsDNA into and through the RuvAB complex. RuvB forms 2 homohexamers on either side of HJ DNA bound by 1 or 2 RuvA tetramers; 4 subunits per hexamer contact DNA at a time. Coordinated motions by a converter formed by DNA-disengaged RuvB subunits stimulates ATP hydrolysis and nucleotide exchange. Immobilization of the converter enables RuvB to convert the ATP-contained energy into a lever motion, pulling 2 nucleotides of DNA out of the RuvA tetramer per ATP hydrolyzed, thus driving DNA branch migration. The RuvB motors rotate together with the DNA substrate, which together with the progressing nucleotide cycle form the mechanistic basis for DNA recombination by continuous HJ branch migration. Branch migration allows RuvC to scan DNA until it finds its consensus sequence, where it cleaves and resolves cruciform DNA. The sequence is that of Holliday junction branch migration complex subunit RuvB from Helicobacter acinonychis (strain Sheeba).